Reading from the N-terminus, the 629-residue chain is Dehydrogenase pyvF (629 aa).

The signal sequence occupies residues 1-22 (MAGSPFTTALLSAWTLSTVAVG). FAD is bound by residues 61-62 (AS) and 82-83 (EA). N-linked (GlcNAc...) asparagine glycosylation occurs at asparagine 92. 144–147 (NLMA) contacts FAD. 6 N-linked (GlcNAc...) asparagine glycosylation sites follow: asparagine 172, asparagine 182, asparagine 256, asparagine 284, asparagine 312, and asparagine 421. Histidine 552 serves as the catalytic Proton acceptor. FAD contacts are provided by residues alanine 586 and 597–598 (PL).

This sequence belongs to the GMC oxidoreductase family. Homodimer. Requires FAD as cofactor.

It functions in the pathway secondary metabolite biosynthesis. Its function is as follows. Dehydrogenase; part of the gene cluster that mediates the biosynthesis of pyranoviolin A, a pyranonigrin analog with a C-3 methoxy group. Initially, the PKS portion of pyvA synthesizes C-10 carbon chain from 5 molecules of malonyl-CoA, which is then condensed with the thiolation (T) domain-bound glycine activated by the adenylation (A) domain. The subsequent chain release by Dieckmann condensation (DKC) could be catalyzed by the TE domain present at the C-terminus of pyvA and/or the alpha/beta hydrolase pyvD, installing the tetramic acid moiety. The FAD-dependent monooxygenase pyvC next epoxidizes one of the olefins of the polyketide part, and the epoxide ring-opening induces the dihydro-gamma-pyrone ring formation. The cytochrome P450 monooxygeanse pyvB would be responsible for the 2 consecutive reactions, in which the dihydro-gamma-pyrone is oxidized to gamma-pyrone and C-7 is hydroxylated to yield pyranonigrin F. Finally, the O-methyltransferase pyvH methylates the C-3 hydroxy group to complete the biosynthesis. The polypeptide is Dehydrogenase pyvF (Aspergillus violaceofuscus (strain CBS 115571)).